The primary structure comprises 190 residues: 6,7-dimethyl-8-ribityllumazine synthase (190 aa).

5-amino-6-(D-ribitylamino)uracil is bound by residues Phe-23, 61 to 63, and 85 to 87; these read SFE and AVI. 90-91 is a binding site for (2S)-2-hydroxy-3-oxobutyl phosphate; that stretch reads QT. Catalysis depends on His-93, which acts as the Proton donor. Residue Phe-118 participates in 5-amino-6-(D-ribitylamino)uracil binding. Arg-132 is a (2S)-2-hydroxy-3-oxobutyl phosphate binding site.

Belongs to the DMRL synthase family.

It catalyses the reaction (2S)-2-hydroxy-3-oxobutyl phosphate + 5-amino-6-(D-ribitylamino)uracil = 6,7-dimethyl-8-(1-D-ribityl)lumazine + phosphate + 2 H2O + H(+). Its pathway is cofactor biosynthesis; riboflavin biosynthesis; riboflavin from 2-hydroxy-3-oxobutyl phosphate and 5-amino-6-(D-ribitylamino)uracil: step 1/2. Catalyzes the formation of 6,7-dimethyl-8-ribityllumazine by condensation of 5-amino-6-(D-ribitylamino)uracil with 3,4-dihydroxy-2-butanone 4-phosphate. This is the penultimate step in the biosynthesis of riboflavin. The sequence is that of 6,7-dimethyl-8-ribityllumazine synthase from Trichormus variabilis (strain ATCC 29413 / PCC 7937) (Anabaena variabilis).